The primary structure comprises 391 residues: Digeranylgeranylglycerophospholipid reductase (391 aa).

FAD is bound by residues G19, D38, C49, A50, A52, R99, V123, D279, G291, and I292. V369 is a binding site for a 2,3-bis-O-(geranylgeranyl)-sn-glycerol 1-phospholipid.

Belongs to the geranylgeranyl reductase family. DGGGPL reductase subfamily. The cofactor is FAD.

It catalyses the reaction a 2,3-bis-O-phytanyl-sn-glycerol 1-phospholipid + 8 A = a 2,3-bis-O-(geranylgeranyl)-sn-glycerol 1-phospholipid + 8 AH2. The enzyme catalyses 2,3-bis-O-(phytanyl)-sn-glycerol 1-phosphate + 8 A = 2,3-bis-O-(geranylgeranyl)-sn-glycerol 1-phosphate + 8 AH2. It carries out the reaction CDP-2,3-bis-O-(geranylgeranyl)-sn-glycerol + 8 AH2 = CDP-2,3-bis-O-(phytanyl)-sn-glycerol + 8 A. The catalysed reaction is archaetidylserine + 8 AH2 = 2,3-bis-O-phytanyl-sn-glycero-3-phospho-L-serine + 8 A. It participates in membrane lipid metabolism; glycerophospholipid metabolism. Functionally, is involved in the reduction of 2,3-digeranylgeranylglycerophospholipids (unsaturated archaeols) into 2,3-diphytanylglycerophospholipids (saturated archaeols) in the biosynthesis of archaeal membrane lipids. Catalyzes the formation of archaetidic acid (2,3-di-O-phytanyl-sn-glyceryl phosphate) from 2,3-di-O-geranylgeranylglyceryl phosphate (DGGGP) via the hydrogenation of each double bond of the isoprenoid chains. Is also probably able to reduce double bonds of geranyl groups in CDP-2,3-bis-O-(geranylgeranyl)-sn-glycerol and archaetidylserine, thus acting at various stages in the biosynthesis of archaeal membrane lipids. The polypeptide is Digeranylgeranylglycerophospholipid reductase (Methanococcus aeolicus (strain ATCC BAA-1280 / DSM 17508 / OCM 812 / Nankai-3)).